A 137-amino-acid chain; its full sequence is Venom allergen 4 (137 aa).

An N-terminal signal peptide occupies residues 1 to 19; the sequence is MKTFVLVSCLLVFTQIIYA.

It belongs to the ant venom allergen 2/4 family. Monomer. As to expression, expressed by the venom gland.

Its subcellular location is the secreted. This is Venom allergen 4 from Solenopsis geminata (Tropical fire ant).